The primary structure comprises 448 residues: Acyl-lipid (9-3)-desaturase (448 aa).

Residues 6–90 (KKYITSDELK…LKDYSVSEVS (85 aa)) form the Cytochrome b5 heme-binding domain. Histidine 41 and histidine 64 together coordinate heme. 2 helical membrane-spanning segments follow: residues 112-132 (IMFATLCFIAMLFAMSVYGVL) and 137-157 (VLVHLFSGCLMGFLWIQSGWI). The short motif at 159–163 (HDAGH) is the Histidine box-1 element. The chain crosses the membrane as a helical span at residues 172–192 (LNKFMGIFAANCLSGISIGWW). A Histidine box-2 motif is present at residues 196 to 200 (HNAHH). A run of 3 helical transmembrane segments spans residues 212-232 (LQYIPFLVVSSKFFGSLTSHF), 254-274 (FYPIMCAARLNMYVQSLIMLL), and 286-306 (LLGCLVFSIWYPLLVSCLPNW). The short motif at 373–377 (QIEHH) is the Histidine box-3 element.

This sequence belongs to the fatty acid desaturase type 1 family.

It localises to the endoplasmic reticulum membrane. The enzyme catalyses (9Z,12Z,15Z)-octadecatrienoyl-containing glycerolipid + 2 Fe(II)-[cytochrome b5] + O2 + 2 H(+) = (6Z,9Z,12Z,15Z)-octadecatetraenoyl-containing glycerolipid + 2 Fe(III)-[cytochrome b5] + 2 H2O. It carries out the reaction a (9Z,12Z)-octadecadienoyl-containing glycerolipid + 2 Fe(II)-[cytochrome b5] + O2 + 2 H(+) = (6Z,9Z,12Z)-octadecatrienoyl-containing glycerolipid + 2 Fe(III)-[cytochrome b5] + 2 H2O. It functions in the pathway lipid metabolism; polyunsaturated fatty acid biosynthesis. In terms of biological role, fatty acid desaturase able to introduce a delta(6)-double bond into delta(9)-unsaturated fatty-acid substrates. Can use both linoleic acid (18:2(9Z,12Z)) and alpha-linolenic acid (18:3(9Z,12Z,15Z)) as substrates. This Borago officinalis (Bourrache) protein is Acyl-lipid (9-3)-desaturase.